The following is a 1208-amino-acid chain: E3 ubiquitin-protein ligase DZIP3 (1208 aa).

The span at 10 to 29 shows a compositional bias: basic and acidic residues; sequence VRHPAVEDQRKEETENKLEK. Disordered regions lie at residues 10–38 and 637–698; these read VRHP…NKQE and GTSI…PHSV. Coiled coils occupy residues 14–43, 647–676, 792–853, and 904–939; these read AVED…DIPT, ESLK…SKED, IASL…SKLN, and QLKA…KVKQ. Residues 637-647 are compositionally biased toward polar residues; sequence GTSIPSESSTE. Positions 648–657 are enriched in basic and acidic residues; that stretch reads SLKDLQEVKS. The segment covering 658–669 has biased composition (basic residues); the sequence is KQRKKKKTKNKK. Positions 670-693 are enriched in basic and acidic residues; that stretch reads NKDSKEDQVPYVVEKEEQLRKEQA. Residues 1088–1145 are disordered; the sequence is KSQSQGKSVSNVNCVSPSHSPSQPDAAQPPKPAWRPLTSQGPATWEGASNPDEEEEEE. Over residues 1089–1112 the composition is skewed to polar residues; it reads SQSQGKSVSNVNCVSPSHSPSQPD. An RING-type; atypical zinc finger spans residues 1148–1188; sequence CVICHENLSPENLSVLPCAHKFHAQCIRPWLMQQGTCPTCR.

Interacts with DAZ proteins. Widely expressed at low level. Highly expressed in skeletal muscle, kidney and heart. Expressed at low level in placenta, lung, brain, liver and pancreas.

It is found in the cytoplasm. The enzyme catalyses S-ubiquitinyl-[E2 ubiquitin-conjugating enzyme]-L-cysteine + [acceptor protein]-L-lysine = [E2 ubiquitin-conjugating enzyme]-L-cysteine + N(6)-ubiquitinyl-[acceptor protein]-L-lysine.. It functions in the pathway protein modification; protein ubiquitination. E3 Ubiquitin ligase proteins mediate ubiquitination and subsequent proteasomal degradation of target proteins. E3 ubiquitin ligases accept ubiquitin from an E2 ubiquitin-conjugating enzyme in the form of a thioester and then directly transfers the ubiquitin to targeted substrates. Able to specifically bind RNA. The sequence is that of E3 ubiquitin-protein ligase DZIP3 (DZIP3) from Homo sapiens (Human).